The primary structure comprises 374 residues: Alanine racemase (374 aa).

Lys-35 (proton acceptor; specific for D-alanine) is an active-site residue. N6-(pyridoxal phosphate)lysine is present on Lys-35. Residue Arg-133 participates in substrate binding. Catalysis depends on Tyr-264, which acts as the Proton acceptor; specific for L-alanine. Met-312 serves as a coordination point for substrate.

This sequence belongs to the alanine racemase family. It depends on pyridoxal 5'-phosphate as a cofactor.

It carries out the reaction L-alanine = D-alanine. It functions in the pathway amino-acid biosynthesis; D-alanine biosynthesis; D-alanine from L-alanine: step 1/1. In terms of biological role, catalyzes the interconversion of L-alanine and D-alanine. May also act on other amino acids. The protein is Alanine racemase (alr) of Thermobifida fusca (strain YX).